Here is a 455-residue protein sequence, read N- to C-terminus: P2X purinoceptor 5 (455 aa).

Residues 1-30 (MGQAAWKGFVLSLFDYKTAKFVVAKSKKVG) lie on the Cytoplasmic side of the membrane. Residues 31–50 (LLYRVLQLTILLYLLIWVFL) form a helical membrane-spanning segment. The Extracellular portion of the chain corresponds to 51 to 339 (IKKSYQDIDT…KFSIIPTVIN (289 aa)). 69–71 (KVK) provides a ligand contact to ATP. N-linked (GlcNAc...) asparagine glycosylation occurs at asparagine 77. Intrachain disulfides connect cysteine 118–cysteine 169, cysteine 129–cysteine 152, and cysteine 135–cysteine 163. Residue asparagine 157 is glycosylated (N-linked (GlcNAc...) asparagine). Threonine 189 is a binding site for ATP. Residue asparagine 202 is glycosylated (N-linked (GlcNAc...) asparagine). Intrachain disulfides connect cysteine 220–cysteine 229 and cysteine 263–cysteine 272. Residues 294–296 (NFR) and lysine 314 contribute to the ATP site. Residues 340 to 362 (IGSGLALMGAGAFFCDLVLIYLI) form a helical membrane-spanning segment. Residues 363 to 455 (RKSEFYRDKK…PSQILQTVKT (93 aa)) are Cytoplasmic-facing.

This sequence belongs to the P2X receptor family. In terms of assembly, functional P2XRs are organized as homomeric and heteromeric trimers. Homotrimer. Forms heterotrimer with P2RX1. Expressed in a number of tissues, with highest levels detected in heart and kidney.

It is found in the cell membrane. It catalyses the reaction Na(+)(in) = Na(+)(out). The catalysed reaction is Ca(2+)(in) = Ca(2+)(out). The enzyme catalyses chloride(in) = chloride(out). With respect to regulation, activated by ATP. Slowly desensitizing. Not activated by ATP agonist alpha/beta-methylene-ATP. Highly sensitive to the antagonists suramin and PPADS. Functionally, ATP-gated nonselective transmembrane cation channel permeable to potassium, sodium and calcium. Unlike other P2RX receptors, the P2X5 receptor is also permeable to chloride. Acts as an important regulator of inflammatory-related bone loss and osteoclast multinucleation. The chain is P2X purinoceptor 5 from Mus musculus (Mouse).